The primary structure comprises 558 residues: MLPVNRARALLTILSQAKTLNHTQQVHAKVIIHGFEDEVVLGSSLTNAYIQSNRLDFATSSFNRIPCWKRNRHSWNTILSGYSKSKTCCYSDVLLLYNRMRRHCDGVDSFNLVFAIKACVGLGLLENGILIHGLAMKNGLDKDDYVAPSLVEMYAQLGTMESAQKVFDEIPVRNSVLWGVLMKGYLKYSKDPEVFRLFCLMRDTGLALDALTLICLVKACGNVFAGKVGKCVHGVSIRRSFIDQSDYLQASIIDMYVKCRLLDNARKLFETSVDRNVVMWTTLISGFAKCERAVEAFDLFRQMLRESILPNQCTLAAILVSCSSLGSLRHGKSVHGYMIRNGIEMDAVNFTSFIDMYARCGNIQMARTVFDMMPERNVISWSSMINAFGINGLFEEALDCFHKMKSQNVVPNSVTFVSLLSACSHSGNVKEGWKQFESMTRDYGVVPEEEHYACMVDLLGRAGEIGEAKSFIDNMPVKPMASAWGALLSACRIHKEVDLAGEIAEKLLSMEPEKSSVYVLLSNIYADAGMWEMVNCVRRKMGIKGYRKHVGQSATEVG.

The N-terminal 79 residues, 1-79, are a transit peptide targeting the mitochondrion; it reads MLPVNRARAL…RNRHSWNTIL (79 aa). PPR repeat units lie at residues 38 to 68, 71 to 103, 108 to 142, 143 to 173, 174 to 208, 209 to 243, 245 to 275, 276 to 310, 311 to 345, 346 to 376, 377 to 411, 412 to 447, and 448 to 482; these read EVVL…IPCW, NRHS…MRRH, DSFN…GLDK, DDYV…IPVR, NSVL…GLAL, DALT…SFID, SDYL…SVDR, NVVM…SILP, NQCT…GIEM, DAVN…MPER, NVIS…NVVP, NSVT…GVVP, and EEEH…PMAS. The type E motif stretch occupies residues 483-558; the sequence is AWGALLSACR…HVGQSATEVG (76 aa).

It belongs to the PPR family. PCMP-E subfamily.

It localises to the mitochondrion. This chain is Pentatricopeptide repeat-containing protein At1g06140, mitochondrial (PCMP-E61), found in Arabidopsis thaliana (Mouse-ear cress).